The following is a 232-amino-acid chain: MNYNKENILTMSDKIDFSLIKFQDSKFKQTCLKYISNNGKKLSFRSERIPSESILICGMNYGLMIYVDDVMRSCLEHMDNYFSSDEVKKSMFGPKYDKMTYVPTIRKGKMGDYIILHFQKSQEEIDSVICKNGFKQDIKLTGKYTSSGKNEYKIHDSSNNSETSLKDYLSQSKDIQIVFHYKSISKRPNTNSYGVKLSITKMELDNPIKTNRYNKIYYNLDVTKSKSLSIKI.

This is an uncharacterized protein from Acanthamoeba polyphaga (Amoeba).